Consider the following 186-residue polypeptide: Akirin-1A (186 aa).

The segment at 14 to 65 is disordered; sequence EALMSPQSPKRRRCAPLPGSPATPSPQRCAIRPEMQQGQQQPLSQLGGDRRL. Over residues 49-60 the composition is skewed to low complexity; it reads QQGQQQPLSQLG. Positions 183–186 match the SYVS motif motif; the sequence is SYVS.

The protein belongs to the akirin family.

The protein resides in the nucleus. Its function is as follows. Molecular adapter that acts as a bridge between proteins, and which is involved skeletal muscle development. Functions as a signal transducer for MSTN during skeletal muscle regeneration and myogenesis. The polypeptide is Akirin-1A (akirin1-a) (Xenopus laevis (African clawed frog)).